The chain runs to 183 residues: Protein vem-1 (183 aa).

The helical transmembrane segment at 9 to 29 (FTMYDAVFLVVVLGFFFYWLT) threads the bilayer. The region spanning 47–146 (MSDMTVEELR…FKYLTVGRLV (100 aa)) is the Cytochrome b5 heme-binding domain.

The protein belongs to the cytochrome b5 family. MAPR subfamily. Interacts with unc-40 (via cytoplasmic domain). As to expression, expressed in the AVG pioneer midline neuron and in several nerve ring neurons that extend projecting axons into the right ventral nerve cord.

It is found in the membrane. The protein localises to the cell projection. Its subcellular location is the axon. In terms of biological role, transmembrane protein required for the axon guidance of a subset of ventral nerve cord-associated interneurons and motor neurons. May function with the netrin receptor unc-40 in axon guidance. This is Protein vem-1 from Caenorhabditis elegans.